Here is a 608-residue protein sequence, read N- to C-terminus: Serine/threonine-protein kinase BUR1 (608 aa).

The region spanning 39–346 (YEIIQKLGQG…ALDALNHNYF (308 aa)) is the Protein kinase domain. ATP contacts are provided by residues 45–53 (LGQGTFGVV) and Lys68. The Proton acceptor role is filled by Asp174. Disordered regions lie at residues 383 to 419 (HEANKIPKAHFPKGPGEYNNSNNYPRNRNGSFPLALP) and 443 to 571 (YIPK…FDED). Residues 400 to 411 (YNNSNNYPRNRN) are compositionally biased toward low complexity. Basic and acidic residues predominate over residues 471 to 482 (LRDRSPRREGHI). The span at 487–502 (STTNSNNISSNSSASN) shows a compositional bias: low complexity. 2 stretches are compositionally biased toward polar residues: residues 503–512 (VGGTLSNPTH) and 539–548 (PQSSSRNVSD). A compositionally biased stretch (acidic residues) spans 559–571 (EQNESDLTDFDED).

It belongs to the protein kinase superfamily. CMGC Ser/Thr protein kinase family. CDC2/CDKX subfamily.

It is found in the nucleus. It catalyses the reaction L-seryl-[protein] + ATP = O-phospho-L-seryl-[protein] + ADP + H(+). It carries out the reaction L-threonyl-[protein] + ATP = O-phospho-L-threonyl-[protein] + ADP + H(+). The enzyme catalyses [DNA-directed RNA polymerase] + ATP = phospho-[DNA-directed RNA polymerase] + ADP + H(+). Functionally, serine/threonine-protein kinase involved in transcription regulation. Phosphorylates the UBC2/RAD6 ubiquitin-conjugating enzyme (E2), leading to monoubiquitination of histone H2B and the silencing of telomeric-associated genes. Also required for histone H3 methylation. Necessary for the recovery from pheromone-induced growth arrest in the cell cycle G1 phase. The polypeptide is Serine/threonine-protein kinase BUR1 (BUR1) (Debaryomyces hansenii (strain ATCC 36239 / CBS 767 / BCRC 21394 / JCM 1990 / NBRC 0083 / IGC 2968) (Yeast)).